The sequence spans 175 residues: Large ribosomal subunit protein uL10 (175 aa).

It belongs to the universal ribosomal protein uL10 family. In terms of assembly, part of the ribosomal stalk of the 50S ribosomal subunit. The N-terminus interacts with L11 and the large rRNA to form the base of the stalk. The C-terminus forms an elongated spine to which L12 dimers bind in a sequential fashion forming a multimeric L10(L12)X complex.

Its function is as follows. Forms part of the ribosomal stalk, playing a central role in the interaction of the ribosome with GTP-bound translation factors. The polypeptide is Large ribosomal subunit protein uL10 (Synechococcus sp. (strain WH7803)).